A 309-amino-acid chain; its full sequence is Probable manganese-dependent inorganic pyrophosphatase (309 aa).

Positions 9, 13, 15, 75, 97, and 149 each coordinate Mn(2+).

This sequence belongs to the PPase class C family. Requires Mn(2+) as cofactor.

The protein resides in the cytoplasm. It carries out the reaction diphosphate + H2O = 2 phosphate + H(+). The polypeptide is Probable manganese-dependent inorganic pyrophosphatase (Staphylococcus epidermidis (strain ATCC 12228 / FDA PCI 1200)).